The chain runs to 488 residues: Glutamyl-tRNA(Gln) amidotransferase subunit B, mitochondrial (488 aa).

The protein belongs to the GatB/GatE family. GatB subfamily. In terms of assembly, subunit of the heterotrimeric GatFAB amidotransferase (AdT) complex, composed of A, B and F subunits.

It is found in the mitochondrion. The catalysed reaction is L-glutamyl-tRNA(Gln) + L-glutamine + ATP + H2O = L-glutaminyl-tRNA(Gln) + L-glutamate + ADP + phosphate + H(+). Its function is as follows. Allows the formation of correctly charged Gln-tRNA(Gln) through the transamidation of misacylated Glu-tRNA(Gln) in the mitochondria. The reaction takes place in the presence of glutamine and ATP through an activated gamma-phospho-Glu-tRNA(Gln). This chain is Glutamyl-tRNA(Gln) amidotransferase subunit B, mitochondrial, found in Candida albicans (strain SC5314 / ATCC MYA-2876) (Yeast).